The primary structure comprises 492 residues: Beclin 1-associated autophagy-related key regulator (492 aa).

At S29 the chain carries Phosphoserine. Residues 70-180 adopt a coiled-coil conformation; that stretch reads RDRERFIDKK…KLGDLVEKKT (111 aa). Disordered stretches follow at residues 213–232 and 411–473; these read TSGRDPADVSSETDSAMTSS and GVAG…AGGM. The span at 222 to 232 shows a compositional bias: polar residues; sequence SSETDSAMTSS. S416 carries the post-translational modification Phosphoserine. The span at 424–433 shows a compositional bias: acidic residues; sequence VSDEETDLGT. At T429 the chain carries Phosphothreonine. Low complexity predominate over residues 447 to 473; the sequence is PSQPVEVSQSQSTQASPPIASSSAGGM.

This sequence belongs to the ATG14 family. In terms of assembly, forms homooligomers; homo-oligomerization is essential for the roles in membrane tethering and enhancement of SNARE-mediated fusion. Component of the PI3K (PI3KC3/PI3K-III/class III phosphatidylinositol 3-kinase) complex I (PI3KC3-C1) in which the core composed of the catalytic subunit PIK3C3, the regulatory subunit PIK3R4 and BECN1 is associated with ATG14. PI3KC3-C1 displays a V-shaped architecture with PIK3R4 serving as a bridge between PIK3C3 and the ATG14:BECN1 subcomplex. PI3KC3-C1 can associate with further regulatory subunits. Interacts with PIK3CB. Interacts (via coiled-coil domain) with BECN2 (via coiled-coil domain); this interaction is tighter than BECN2 self-association. Interacts with the STX17-SNAP29 binary t-SNARE complex. Interacts with NRBF2. Interacts with PIK3C3 and BECN1; this interaction is increased in the absence of TMEM39A. Interacts with STEEP1; the interaction is required for trafficking of STING1 from the endoplasmic reticulum. Interacts with ARMC3 (via ARM domains). Ubiquitinated via 'Lys-6', 'Lys-11' and 'Lys-63'-linked polyubiquitin chains on multiple lysines by MARCHF7, leading to ATG14 aggregation and loss of interaction with STX17.

The protein resides in the cytoplasm. It localises to the endoplasmic reticulum membrane. It is found in the preautophagosomal structure membrane. Its function is as follows. Required for both basal and inducible autophagy. Determines the localization of the autophagy-specific PI3-kinase complex. Plays a role in autophagosome formation and MAP1LC3/LC3 conjugation to phosphatidylethanolamine. Promotes BECN1 translocation from the trans-Golgi network to autophagosomes. Enhances PIK3C3 activity in a BECN1-dependent manner. Essential for the autophagy-dependent phosphorylation of BECN1. Stimulates the phosphorylation of BECN1, but suppresses the phosphorylation PIK3C3 by AMPK. Binds to STX17-SNAP29 binary t-SNARE complex on autophagosomes and primes it for VAMP8 interaction to promote autophagosome-endolysosome fusion. Modulates the hepatic lipid metabolism. The sequence is that of Beclin 1-associated autophagy-related key regulator from Rattus norvegicus (Rat).